Reading from the N-terminus, the 473-residue chain is Mogroside IIIx synthase (473 aa).

H21 serves as the catalytic Proton acceptor. D123 functions as the Charge relay in the catalytic mechanism. T274, Q337, W355, N356, S357, E360, D376, and Q377 together coordinate UDP-alpha-D-glucose.

The protein belongs to the UDP-glycosyltransferase family. As to expression, highly expressed in mature fruits.

The catalysed reaction is mogroside IIE + UDP-alpha-D-glucose = mogroside IIIX + UDP + H(+). It carries out the reaction mogroside III + UDP-alpha-D-glucose = siamenoside I + UDP + H(+). Its pathway is secondary metabolite biosynthesis; terpenoid biosynthesis. Its function is as follows. UDP-glycosyltransferase involved in the biosynthesis of cucurbitacin and mogroside tetracyclic triterpene natural products (e.g. siamenoside I and mogrosides IV, V and VI). Cucurbitacins have cytotoxic properties and exhibit deterrent taste as a defense barrier against herbivores. Mogrosides are nonsugar highly oxygenated compounds used as high-intensity zero-calorie sweeteners; they also possess pharmacological properties such as regulating immunity, lowering blood sugar and lipid levels, protecting the liver, and acting as antioxidants and antitumor agents. Catalyzes the branched glucosylations of mogroside II-E and mogroside III. This is Mogroside IIIx synthase from Siraitia grosvenorii (Monk's fruit).